A 453-amino-acid polypeptide reads, in one-letter code: Frizzled/smoothened-like sans CRD protein G (453 aa).

The first 24 residues, 1–24 (MIYILKNFIIILFFLLIILKRIES), serve as a signal peptide directing secretion. The Extracellular segment spans residues 25–89 (QSLPSLPSPT…PFFTLDEWNK (65 aa)). N-linked (GlcNAc...) asparagine glycosylation is found at Asn-49 and Asn-67. A helical membrane pass occupies residues 90–110 (FLYMSLVMGTISFLCGLFLLI). At 111-124 (TYSPIVNKTHNRHT) the chain is on the cytoplasmic side. A helical transmembrane segment spans residues 125-145 (IGVMCMSFGVCLAMCSDMWNF). Residues 146–170 (GSNFTDQKSICPSPGQYLTTSNSRC) lie on the Extracellular side of the membrane. Asn-148 carries an N-linked (GlcNAc...) asparagine glycan. Residues 171-191 (LGSGIVLQFGGVFGFLNWTLL) traverse the membrane as a helical segment. Topologically, residues 192–209 (SFDLFMNIKGIITKNYDK) are cytoplasmic. The helical transmembrane segment at 210–230 (YYFVATFIIAIIFTFVPIVND) threads the bilayer. Over 231 to 250 (QYSMSYIGLGCWLGSAVYQL) the chain is Extracellular. A helical transmembrane segment spans residues 251 to 271 (IFFWILLSICLIVSSVFIILI). Topologically, residues 272-296 (LKEIYIIIKQSKQKTSLKGNIRPLL) are cytoplasmic. A helical membrane pass occupies residues 297–317 (CITVTSFAFFYMFFYYISIVI). Residues 318–352 (EGDYYERILNEYTDCLMDPTKDVSECKFPRMSVAN) are Extracellular-facing. The helical transmembrane segment at 353–373 (EFVFLLCLRLLGIGAFIFYGI) threads the bilayer. The Cytoplasmic portion of the chain corresponds to 374–453 (NKEVKKIWLN…DDNFKPIIIK (80 aa)).

Belongs to the G-protein coupled receptor Fz/Smo family.

The protein localises to the membrane. This Dictyostelium discoideum (Social amoeba) protein is Frizzled/smoothened-like sans CRD protein G (fscG).